A 95-amino-acid polypeptide reads, in one-letter code: Small ribosomal subunit protein bS16 (95 aa).

The protein belongs to the bacterial ribosomal protein bS16 family.

In Thermotoga neapolitana (strain ATCC 49049 / DSM 4359 / NBRC 107923 / NS-E), this protein is Small ribosomal subunit protein bS16.